The chain runs to 231 residues: Large ribosomal subunit protein uL1 (231 aa).

The protein belongs to the universal ribosomal protein uL1 family. Part of the 50S ribosomal subunit.

In terms of biological role, binds directly to 23S rRNA. The L1 stalk is quite mobile in the ribosome, and is involved in E site tRNA release. Its function is as follows. Protein L1 is also a translational repressor protein, it controls the translation of the L11 operon by binding to its mRNA. This chain is Large ribosomal subunit protein uL1, found in Pseudomonas fluorescens (strain ATCC BAA-477 / NRRL B-23932 / Pf-5).